The primary structure comprises 250 residues: Thermostable monoacylglycerol lipase (250 aa).

F29 contacts substrate. Catalysis depends on S97, which acts as the Nucleophile. M98 is a substrate binding site. Catalysis depends on charge relay system residues D196 and H226.

It belongs to the lipase/esterase LIP3/BchO family. Monomer.

The catalysed reaction is Hydrolyzes glycerol monoesters of long-chain fatty acids.. With respect to regulation, not inhibited by cholate, but slightly inhibited by triton X-100 and deoxycholate. Completely inhibited by PMSF (phenylmethylsulfonyl fluoride) at a concentration of 200 uM. In terms of biological role, hydrolyzes monoacylglycerols, with the highest activity occurring with 1-monolauroylglycerol. In Bacillus sp. (strain H-257), this protein is Thermostable monoacylglycerol lipase.